Consider the following 344-residue polypeptide: Methionine import ATP-binding protein MetN (344 aa).

The ABC transporter domain maps to 2–241 (IKLEKISKIF…PQTQLAKEFI (240 aa)). Position 38–45 (38–45 (GASGAGKS)) interacts with ATP.

Belongs to the ABC transporter superfamily. Methionine importer (TC 3.A.1.24) family. In terms of assembly, the complex is composed of two ATP-binding proteins (MetN), two transmembrane proteins (MetI) and a solute-binding protein (MetQ).

It localises to the cell inner membrane. The enzyme catalyses L-methionine(out) + ATP + H2O = L-methionine(in) + ADP + phosphate + H(+). It carries out the reaction D-methionine(out) + ATP + H2O = D-methionine(in) + ADP + phosphate + H(+). Functionally, part of the ABC transporter complex MetNIQ involved in methionine import. Responsible for energy coupling to the transport system. This chain is Methionine import ATP-binding protein MetN, found in Pasteurella multocida (strain Pm70).